Consider the following 60-residue polypeptide: Large ribosomal subunit protein bL32 (60 aa).

The disordered stretch occupies residues 1-44 (MAVQQNKKSRSARDMRRSHDALEASTLSVEKTTGEVHLRHHVSP). Over residues 11 to 22 (SARDMRRSHDAL) the composition is skewed to basic and acidic residues.

This sequence belongs to the bacterial ribosomal protein bL32 family.

In Pseudomonas fluorescens (strain SBW25), this protein is Large ribosomal subunit protein bL32.